The chain runs to 255 residues: Ribosomal RNA small subunit methyltransferase J (255 aa).

S-adenosyl-L-methionine contacts are provided by residues Arg107–Asp108, Glu123–Arg124, and Asp178. The tract at residues Ala228–Thr247 is disordered.

Belongs to the methyltransferase superfamily. RsmJ family.

It localises to the cytoplasm. The catalysed reaction is guanosine(1516) in 16S rRNA + S-adenosyl-L-methionine = N(2)-methylguanosine(1516) in 16S rRNA + S-adenosyl-L-homocysteine + H(+). Specifically methylates the guanosine in position 1516 of 16S rRNA. The sequence is that of Ribosomal RNA small subunit methyltransferase J from Thioalkalivibrio sulfidiphilus (strain HL-EbGR7).